Here is a 358-residue protein sequence, read N- to C-terminus: Carbamoyl phosphate synthase small chain (358 aa).

CPSase stretches follow at residues 1–168 (MYNR…PALG) and 1–171 (MYNR…GRGR). Positions 46, 220, and 222 each coordinate L-glutamine. The Glutamine amidotransferase type-1 domain maps to 172-358 (RVVLVDLGMK…FIKNIDNNMK (187 aa)). Catalysis depends on Cys-247, which acts as the Nucleophile. Residues Met-248, Gln-251, Asn-289, Gly-291, and Tyr-292 each coordinate L-glutamine. Catalysis depends on residues His-332 and Glu-334.

It belongs to the CarA family. In terms of assembly, composed of two chains; the small (or glutamine) chain promotes the hydrolysis of glutamine to ammonia, which is used by the large (or ammonia) chain to synthesize carbamoyl phosphate. Tetramer of heterodimers (alpha,beta)4.

The catalysed reaction is hydrogencarbonate + L-glutamine + 2 ATP + H2O = carbamoyl phosphate + L-glutamate + 2 ADP + phosphate + 2 H(+). It carries out the reaction L-glutamine + H2O = L-glutamate + NH4(+). The protein operates within amino-acid biosynthesis; L-arginine biosynthesis; carbamoyl phosphate from bicarbonate: step 1/1. Its pathway is pyrimidine metabolism; UMP biosynthesis via de novo pathway; (S)-dihydroorotate from bicarbonate: step 1/3. Small subunit of the glutamine-dependent carbamoyl phosphate synthetase (CPSase). CPSase catalyzes the formation of carbamoyl phosphate from the ammonia moiety of glutamine, carbonate, and phosphate donated by ATP, constituting the first step of 2 biosynthetic pathways, one leading to arginine and/or urea and the other to pyrimidine nucleotides. The small subunit (glutamine amidotransferase) binds and cleaves glutamine to supply the large subunit with the substrate ammonia. This chain is Carbamoyl phosphate synthase small chain, found in Fusobacterium nucleatum subsp. nucleatum (strain ATCC 25586 / DSM 15643 / BCRC 10681 / CIP 101130 / JCM 8532 / KCTC 2640 / LMG 13131 / VPI 4355).